Here is a 309-residue protein sequence, read N- to C-terminus: p-hydroxybenzoic acid efflux pump subunit AaeA (309 aa).

A helical membrane pass occupies residues 12–32; that stretch reads AITVVLVILAFIAIFNAWVYY.

This sequence belongs to the membrane fusion protein (MFP) (TC 8.A.1) family.

Its subcellular location is the cell inner membrane. Forms an efflux pump with AaeB. This chain is p-hydroxybenzoic acid efflux pump subunit AaeA, found in Escherichia coli O157:H7.